The following is a 136-amino-acid chain: Large ribosomal subunit protein uL16c (136 aa).

The interval 1 to 20 is disordered; sequence MLSPKRTRFRKQHRGRMKGK.

Belongs to the universal ribosomal protein uL16 family. Part of the 50S ribosomal subunit.

The protein resides in the plastid. Its subcellular location is the chloroplast. The chain is Large ribosomal subunit protein uL16c from Triticum aestivum (Wheat).